The chain runs to 511 residues: Maturase K (511 aa).

The protein belongs to the intron maturase 2 family. MatK subfamily.

Its subcellular location is the plastid. The protein resides in the chloroplast. Functionally, usually encoded in the trnK tRNA gene intron. Probably assists in splicing its own and other chloroplast group II introns. The chain is Maturase K from Diplacus aurantiacus (Orange bush monkey flower).